Reading from the N-terminus, the 68-residue chain is Metallothionein-3 (68 aa).

Met-1 is modified (N-acetylmethionine). The tract at residues 1–30 (MDPETCPCPSGGSCTCADSCKCEGCKCTSC) is beta. The a divalent metal cation site is built by Cys-6, Cys-8, Cys-14, Cys-16, Cys-20, Cys-22, Cys-25, Cys-27, and Cys-30. Positions 31-68 (KKSCCSCCPAECEKCAKDCVCKGGEAAEAEAEKCSCCQ) are alpha. The residue at position 33 (Ser-33) is a Phosphoserine. The a divalent metal cation site is built by Cys-34, Cys-35, Cys-37, Cys-38, Cys-42, Cys-45, Cys-49, Cys-51, Cys-64, Cys-66, and Cys-67.

It belongs to the metallothionein superfamily. Type 1 family. Abundant in a subset of astrocytes in the normal human brain, but greatly reduced in the Alzheimer disease (AD) brain.

Binds heavy metals. Contains three zinc and three copper atoms per polypeptide chain and only a negligible amount of cadmium. Inhibits survival and neurite formation of cortical neurons in vitro. This is Metallothionein-3 (MT3) from Homo sapiens (Human).